The following is a 631-amino-acid chain: DDB1- and CUL4-associated factor 8-like protein 2 (631 aa).

2 disordered regions span residues 1 to 91 (MSHQ…EDFE) and 108 to 163 (EEET…HEQY). Over residues 44–54 (SELSVTVTGDG) the composition is skewed to polar residues. 2 stretches are compositionally biased toward acidic residues: residues 77–88 (SASEDIELESLE) and 108–147 (EEET…EEEE). WD repeat units follow at residues 226-265 (DHVG…PVLN), 269-310 (GHTN…YFNN), 316-356 (QHRG…PASK), 364-404 (DKKV…KKEN), 420-459 (DFPT…GAQY), 467-507 (RNNT…IIQF), and 511-550 (SREG…ATEL). The interval 594 to 631 (QDWRSGEAEFPDEESDESSSTSETSEEEVQDRVQCMPS) is disordered.

It belongs to the WD repeat DCAF8 family.

The protein is DDB1- and CUL4-associated factor 8-like protein 2 (DCAF8L2) of Homo sapiens (Human).